Reading from the N-terminus, the 309-residue chain is Dehydrogenase/reductase SDR family member 7B (309 aa).

Over 1–5 (MERAL) the chain is Cytoplasmic. A helical; Signal-anchor for type II membrane protein membrane pass occupies residues 6 to 26 (GVGIGPLAAGTVGLLILLKVI). Residues 27-271 (QRLRRRPNIQ…LKAVCQKKKD (245 aa)) lie on the Lumenal side of the membrane. NAD(+)-binding residues include Ser-47 and Leu-49. Substrate is bound at residue Ser-179. 3 residues coordinate NAD(+): Tyr-192, Lys-196, and Thr-227. Residue Tyr-192 is the Proton acceptor of the active site.

Belongs to the short-chain dehydrogenases/reductases (SDR) family.

It is found in the endoplasmic reticulum membrane. Functionally, putative oxidoreductase. The sequence is that of Dehydrogenase/reductase SDR family member 7B (dhrs7b) from Danio rerio (Zebrafish).